The sequence spans 331 residues: DNA-directed RNA polymerase subunit alpha (331 aa).

The interval 1–235 (MTMHIRWRGM…KHLNPFVQYR (235 aa)) is alpha N-terminal domain (alpha-NTD). The tract at residues 255–331 (QLEAKLNMTL…GMRVPNQPLF (77 aa)) is alpha C-terminal domain (alpha-CTD).

The protein belongs to the RNA polymerase alpha chain family. As to quaternary structure, homodimer. The RNAP catalytic core consists of 2 alpha, 1 beta, 1 beta' and 1 omega subunit. When a sigma factor is associated with the core the holoenzyme is formed, which can initiate transcription.

It carries out the reaction RNA(n) + a ribonucleoside 5'-triphosphate = RNA(n+1) + diphosphate. In terms of biological role, DNA-dependent RNA polymerase catalyzes the transcription of DNA into RNA using the four ribonucleoside triphosphates as substrates. The protein is DNA-directed RNA polymerase subunit alpha of Rhodopirellula baltica (strain DSM 10527 / NCIMB 13988 / SH1).